Here is a 383-residue protein sequence, read N- to C-terminus: MKTKLPNFIEIYRQLIATPSISATDSALDQSNETLINLLGGWFRDLGFTVEVQPVPGTRNKFNMLAKSGSGAGGLLLAGHTDTVPFDDGRWTRDPFTLTEHDNKLYGLGTADMKGFFAFILDTLRDVELSTLKKPLYILATADEETTMAGAKYFSESTALRPDCAIIGEPTSLKPVRAHKGHISNAIRIQGQSGHSSDPGRGVNAIELMHESITQLMALRNTLKERYRHAGFAIPYPTMNFGHIHGGDAANRICACCELHMDIRPLPGLTLSDLDGLLNEALAPVSARWPGRLTVGELHPPIPGYECPREHQLVQVVEKLLGRETEVVNYCTEAPFIQQVCPTLVLGPGSIEQAHQPDEFIDTAFIKPTRDLIAQVVHHFCHH.

His-80 provides a ligand contact to Zn(2+). Residue Asp-82 is part of the active site. Residue Asp-112 coordinates Zn(2+). Residue Glu-144 is part of the active site. Glu-145, Glu-169, and His-355 together coordinate Zn(2+).

The protein belongs to the peptidase M20A family. ArgE subfamily. As to quaternary structure, homodimer. Zn(2+) serves as cofactor. The cofactor is Co(2+). Glutathione is required as a cofactor.

The protein localises to the cytoplasm. It catalyses the reaction N(2)-acetyl-L-ornithine + H2O = L-ornithine + acetate. It functions in the pathway amino-acid biosynthesis; L-arginine biosynthesis; L-ornithine from N(2)-acetyl-L-ornithine (linear): step 1/1. In terms of biological role, catalyzes the hydrolysis of the amide bond of N(2)-acetylated L-amino acids. Cleaves the acetyl group from N-acetyl-L-ornithine to form L-ornithine, an intermediate in L-arginine biosynthesis pathway, and a branchpoint in the synthesis of polyamines. This is Acetylornithine deacetylase from Erwinia tasmaniensis (strain DSM 17950 / CFBP 7177 / CIP 109463 / NCPPB 4357 / Et1/99).